A 500-amino-acid polypeptide reads, in one-letter code: NAD(P)H-quinone oxidoreductase chain 4, chloroplastic (500 aa).

14 consecutive transmembrane segments (helical) span residues 4 to 24 (FPWL…MLFL), 35 to 55 (YTIC…CYNF), 87 to 107 (IGTI…AFPV), 113 to 130 (LFHF…GSFS), 134 to 154 (LLLF…LLAM), 167 to 187 (FILY…GLSL), 211 to 231 (ILFY…IPLH), 242 to 262 (HYST…YGLV), 272 to 292 (AHSM…IYAA), 305 to 325 (IAYS…SITD), 330 to 350 (GAIL…FLAG), 386 to 406 (LALP…GIIT), 416 to 436 (ILII…LLSM), and 462 to 482 (LFLS…PDFV).

Belongs to the complex I subunit 4 family.

It is found in the plastid. The protein localises to the chloroplast thylakoid membrane. The catalysed reaction is a plastoquinone + NADH + (n+1) H(+)(in) = a plastoquinol + NAD(+) + n H(+)(out). It catalyses the reaction a plastoquinone + NADPH + (n+1) H(+)(in) = a plastoquinol + NADP(+) + n H(+)(out). The sequence is that of NAD(P)H-quinone oxidoreductase chain 4, chloroplastic from Lepidium virginicum (Virginia pepperweed).